Consider the following 195-residue polypeptide: dITP/XTP pyrophosphatase (195 aa).

8–13 is a substrate binding site; sequence SNNQGK. Positions 39 and 68 each coordinate Mg(2+). Aspartate 68 acts as the Proton acceptor in catalysis. Residues serine 69, 149 to 152, lysine 172, and 177 to 178 contribute to the substrate site; these read FGYD and HR.

It belongs to the HAM1 NTPase family. As to quaternary structure, homodimer. Mg(2+) serves as cofactor.

The catalysed reaction is XTP + H2O = XMP + diphosphate + H(+). The enzyme catalyses dITP + H2O = dIMP + diphosphate + H(+). It carries out the reaction ITP + H2O = IMP + diphosphate + H(+). Functionally, pyrophosphatase that catalyzes the hydrolysis of nucleoside triphosphates to their monophosphate derivatives, with a high preference for the non-canonical purine nucleotides XTP (xanthosine triphosphate), dITP (deoxyinosine triphosphate) and ITP. Seems to function as a house-cleaning enzyme that removes non-canonical purine nucleotides from the nucleotide pool, thus preventing their incorporation into DNA/RNA and avoiding chromosomal lesions. This Staphylococcus aureus (strain COL) protein is dITP/XTP pyrophosphatase.